A 406-amino-acid chain; its full sequence is Elongation factor Tu (406 aa).

One can recognise a tr-type G domain in the interval 10–215 (KPHVNVGTIG…AIDEYIPTPV (206 aa)). The segment at 19–26 (GHVDHGKT) is G1. A GTP-binding site is contributed by 19–26 (GHVDHGKT). Residue threonine 26 participates in Mg(2+) binding. Residues 61 to 65 (GITIN) form a G2 region. The tract at residues 82–85 (DCPG) is G3. Residues 82 to 86 (DCPGH) and 137 to 140 (NKVD) contribute to the GTP site. The tract at residues 137 to 140 (NKVD) is G4. Positions 175–177 (SAL) are G5.

Belongs to the TRAFAC class translation factor GTPase superfamily. Classic translation factor GTPase family. EF-Tu/EF-1A subfamily. In terms of assembly, monomer.

It is found in the cytoplasm. The catalysed reaction is GTP + H2O = GDP + phosphate + H(+). GTP hydrolase that promotes the GTP-dependent binding of aminoacyl-tRNA to the A-site of ribosomes during protein biosynthesis. The polypeptide is Elongation factor Tu (Thermus thermophilus (strain ATCC BAA-163 / DSM 7039 / HB27)).